We begin with the raw amino-acid sequence, 83 residues long: Small ribosomal subunit protein bS16 (83 aa).

This sequence belongs to the bacterial ribosomal protein bS16 family.

The chain is Small ribosomal subunit protein bS16 from Shewanella denitrificans (strain OS217 / ATCC BAA-1090 / DSM 15013).